A 388-amino-acid polypeptide reads, in one-letter code: Staphopain A (388 aa).

The first 25 residues, 1–25 (MKRNFPKLIALSLILSLSVTPIANA), serve as a signal peptide directing secretion. A propeptide spanning residues 26–214 (ESNSNIKAKD…TSQFKSNNYT (189 aa)) is cleaved from the precursor. Residues Cys238, His334, and Asn355 contribute to the active site.

It belongs to the peptidase C47 family. In the cytoplasm, prematurely activated/folded ScpA forms a stable non-covalent complex with ScpB. Post-translationally, cleavage leads to the activation of ScpA probably by an auto-catalytic manner.

It is found in the secreted. The enzyme catalyses Broad endopeptidase action on proteins including elastin, but rather limited hydrolysis of small-molecule substrates. Assays are conveniently made with hemoglobin, casein or Z-Phe-Arg-NHMec as substrate.. With respect to regulation, prematurely activated/folded staphopain A is inhibited by staphostatin A (ScpB), which is probably required to protect staphylococcal cytoplasmic proteins from degradation by ScpA. Cysteine protease that plays an important role in the inhibition of host innate immune response. Cleaves host elastins found in connective tissues, pulmonary surfactant protein A in the lungs, and the chemokine receptor CXCR2 on leukocytes. Proteolytic cleavage of surfactant protein A impairs bacterial phagocytosis by neutrophils while CXCR2 degradation blocks neutrophil activation and chemotaxis. Additionally, promotes vascular leakage by activating the plasma kallikerin/kinin system, resulting in hypotension. This is Staphopain A (sspP) from Staphylococcus aureus (strain MSSA476).